Reading from the N-terminus, the 266-residue chain is MPNITVTSLLAMKHKGEKITMLTCYDATFAHTACQAGVEVLLIGDSLGMVLQGHDSTLPVTTAETAYHVACVKRGNQGALILADLPFMANATLEQTFINSTTLMQAGAHMIKVEGAAWLGESIRLLAERGIPVCAHMGLTPQSVNVLGGYKVQGRLEAQARQMRADAIALEQAGAAMILLECVPSELAEEITHAVKIPVIGIGAGSATDGQVLVLHDMLGLSITGRVPKFVKNFMIGQPDIQSAIQAYVSAVKDVSFPAIEHGFSA.

Residues Asp-45 and Asp-84 each coordinate Mg(2+). Residues 45–46 (DS), Asp-84, and Lys-112 contribute to the 3-methyl-2-oxobutanoate site. A Mg(2+)-binding site is contributed by Glu-114. Glu-181 serves as the catalytic Proton acceptor.

It belongs to the PanB family. Homodecamer; pentamer of dimers. The cofactor is Mg(2+).

The protein localises to the cytoplasm. The enzyme catalyses 3-methyl-2-oxobutanoate + (6R)-5,10-methylene-5,6,7,8-tetrahydrofolate + H2O = 2-dehydropantoate + (6S)-5,6,7,8-tetrahydrofolate. It participates in cofactor biosynthesis; (R)-pantothenate biosynthesis; (R)-pantoate from 3-methyl-2-oxobutanoate: step 1/2. Its function is as follows. Catalyzes the reversible reaction in which hydroxymethyl group from 5,10-methylenetetrahydrofolate is transferred onto alpha-ketoisovalerate to form ketopantoate. This chain is 3-methyl-2-oxobutanoate hydroxymethyltransferase, found in Pseudomonas syringae pv. tomato (strain ATCC BAA-871 / DC3000).